A 163-amino-acid polypeptide reads, in one-letter code: MGGLLLAAFLALVSVPRAQAVWLGRLDPEQLLGPWYVLAVASREKGFAMEKDMKNVVGVVVTLTPENNLRTLSSQHGLGGCDQSVMDLIKRNSGWVFENPSIGVLELWVLATNFRDYAIIFTQLEFGDEPFNTVELYSLTETASQEAMGLFTKWSRSLGFLSQ.

The N-terminal stretch at 1-20 (MGGLLLAAFLALVSVPRAQA) is a signal peptide.

Belongs to the calycin superfamily. Lipocalin family. As to expression, predominantly expressed in epididymis.

It is found in the secreted. Its function is as follows. May play a role in male fertility. The protein is Epididymal-specific lipocalin-6 (LCN6) of Homo sapiens (Human).